A 946-amino-acid polypeptide reads, in one-letter code: Phosphatidylethanolamine N-methyltransferase (946 aa).

The segment at methionine 1 to aspartate 51 is disordered. The Lumenal portion of the chain corresponds to methionine 1–aspartate 78. The segment covering valine 33–proline 42 has biased composition (basic and acidic residues). Residues valine 79–leucine 99 form a helical membrane-spanning segment. Over lysine 100–proline 102 the chain is Cytoplasmic. The chain crosses the membrane as a helical span at residues isoleucine 103–leucine 123. Residues threonine 124–arginine 188 are Lumenal-facing. A helical transmembrane segment spans residues valine 189–alanine 209. Residues histidine 210–glycine 216 are Cytoplasmic-facing. Residues phenylalanine 217 to valine 237 form a helical membrane-spanning segment. At lysine 238–aspartate 266 the chain is on the lumenal side. The chain crosses the membrane as a helical span at residues glycine 267–isoleucine 287. Residues serine 288 to serine 293 are Cytoplasmic-facing. The helical transmembrane segment at tyrosine 294–valine 314 threads the bilayer. The Lumenal portion of the chain corresponds to glutamate 315 to threonine 377. The disordered stretch occupies residues threonine 322 to threonine 355. Residues glutamate 335–glutamate 344 show a composition bias toward low complexity. Residues serine 378–tyrosine 398 form a helical membrane-spanning segment. Residues glutamine 399–alanine 400 lie on the Cytoplasmic side of the membrane. A helical transmembrane segment spans residues leucine 401–leucine 421. Residues threonine 422–glutamine 447 are Lumenal-facing. The helical transmembrane segment at tryptophan 448–tryptophan 468 threads the bilayer. At lysine 469–aspartate 476 the chain is on the cytoplasmic side. Residues tryptophan 477–isoleucine 497 form a helical membrane-spanning segment. Residues tryptophan 498 to serine 555 lie on the Lumenal side of the membrane. A helical transmembrane segment spans residues serine 556 to valine 576. Topologically, residues glutamate 577 to leucine 946 are cytoplasmic.

This sequence belongs to the class VI-like SAM-binding methyltransferase superfamily. CHO2 family.

The protein localises to the endoplasmic reticulum membrane. It catalyses the reaction a 1,2-diacyl-sn-glycero-3-phosphoethanolamine + S-adenosyl-L-methionine = a 1,2-diacyl-sn-glycero-3-phospho-N-methylethanolamine + S-adenosyl-L-homocysteine + H(+). The protein operates within phospholipid metabolism; phosphatidylcholine biosynthesis. Catalyzes the first step of the methylation pathway of phosphatidylcholine biosynthesis, the SAM-dependent methylation of phosphatidylethanolamine (PE) to phosphatidylmonomethylethanolamine (PMME). The sequence is that of Phosphatidylethanolamine N-methyltransferase (CHO2) from Chaetomium globosum (strain ATCC 6205 / CBS 148.51 / DSM 1962 / NBRC 6347 / NRRL 1970) (Soil fungus).